We begin with the raw amino-acid sequence, 205 residues long: ATP phosphoribosyltransferase (205 aa).

The protein belongs to the ATP phosphoribosyltransferase family. Short subfamily. As to quaternary structure, heteromultimer composed of HisG and HisZ subunits.

The protein localises to the cytoplasm. It catalyses the reaction 1-(5-phospho-beta-D-ribosyl)-ATP + diphosphate = 5-phospho-alpha-D-ribose 1-diphosphate + ATP. It participates in amino-acid biosynthesis; L-histidine biosynthesis; L-histidine from 5-phospho-alpha-D-ribose 1-diphosphate: step 1/9. In terms of biological role, catalyzes the condensation of ATP and 5-phosphoribose 1-diphosphate to form N'-(5'-phosphoribosyl)-ATP (PR-ATP). Has a crucial role in the pathway because the rate of histidine biosynthesis seems to be controlled primarily by regulation of HisG enzymatic activity. In Staphylococcus carnosus (strain TM300), this protein is ATP phosphoribosyltransferase.